A 340-amino-acid chain; its full sequence is 3-hydroxybenzoate synthase (340 aa).

Positions 147, 154, 207, and 220 each coordinate substrate. The Proton acceptor role is filled by glutamate 334.

This sequence belongs to the FkbO/Hyg5 family. Trimer.

It carries out the reaction chorismate = 3-hydroxybenzoate + pyruvate. Functionally, involved in the biosynthesis of BC325, a rapamycin analog containing a 3-hydroxybenzoate starter unit. Catalyzes the hydrolysis of chorismate via an intramolecular mechanism to yield 3-hydroxybenzoate (3HBA). The sequence is that of 3-hydroxybenzoate synthase from Streptomyces hygroscopicus.